The following is a 363-amino-acid chain: 3-dehydroquinate synthase (363 aa).

NAD(+) contacts are provided by residues 71–76, 105–109, 129–130, Lys-142, Lys-151, and 169–172; these read DGEQYK, GVIGD, TT, and CLKT. Residues Glu-184, His-247, and His-264 each contribute to the Zn(2+) site.

This sequence belongs to the sugar phosphate cyclases superfamily. Dehydroquinate synthase family. It depends on NAD(+) as a cofactor. Requires Co(2+) as cofactor. The cofactor is Zn(2+).

The protein resides in the cytoplasm. The catalysed reaction is 7-phospho-2-dehydro-3-deoxy-D-arabino-heptonate = 3-dehydroquinate + phosphate. The protein operates within metabolic intermediate biosynthesis; chorismate biosynthesis; chorismate from D-erythrose 4-phosphate and phosphoenolpyruvate: step 2/7. Functionally, catalyzes the conversion of 3-deoxy-D-arabino-heptulosonate 7-phosphate (DAHP) to dehydroquinate (DHQ). In Vibrio vulnificus (strain CMCP6), this protein is 3-dehydroquinate synthase.